Consider the following 511-residue polypeptide: Lysine--tRNA ligase 2 (511 aa).

Positions 1–11 (MTMEINNTDPS) are enriched in polar residues. The segment at 1-21 (MTMEINNTDPSENMPLPDDVD) is disordered. Residues Glu421 and Glu428 each coordinate Mg(2+).

The protein belongs to the class-II aminoacyl-tRNA synthetase family. As to quaternary structure, homodimer. Requires Mg(2+) as cofactor.

It localises to the cytoplasm. It carries out the reaction tRNA(Lys) + L-lysine + ATP = L-lysyl-tRNA(Lys) + AMP + diphosphate. This Methanosarcina acetivorans (strain ATCC 35395 / DSM 2834 / JCM 12185 / C2A) protein is Lysine--tRNA ligase 2.